A 101-amino-acid polypeptide reads, in one-letter code: Small integral membrane protein 21 (101 aa).

A helical membrane pass occupies residues 49-65 (HIRFFTLLVLFHVMVLL).

It is found in the membrane. In Homo sapiens (Human), this protein is Small integral membrane protein 21 (SMIM21).